The primary structure comprises 175 residues: Hypoxanthine-guanine phosphoribosyltransferase (175 aa).

Diphosphate contacts are provided by Lys-40 and Gly-41. Mg(2+)-binding residues include Glu-96 and Asp-97. The Proton acceptor role is filled by Asp-100. GMP-binding positions include Lys-128, 149 to 150 (FL), and Asp-156. Residue Arg-162 coordinates diphosphate.

The protein belongs to the purine/pyrimidine phosphoribosyltransferase family. It depends on Mg(2+) as a cofactor.

The protein localises to the cytoplasm. The catalysed reaction is IMP + diphosphate = hypoxanthine + 5-phospho-alpha-D-ribose 1-diphosphate. It catalyses the reaction GMP + diphosphate = guanine + 5-phospho-alpha-D-ribose 1-diphosphate. The protein operates within purine metabolism; IMP biosynthesis via salvage pathway; IMP from hypoxanthine: step 1/1. It participates in purine metabolism; GMP biosynthesis via salvage pathway; GMP from guanine: step 1/1. Its function is as follows. Purine salvage pathway enzyme that catalyzes the transfer of the ribosyl-5-phosphate group from 5-phospho-alpha-D-ribose 1-diphosphate (PRPP) to the N9 position of the 6-oxopurines hypoxanthine and guanine to form the corresponding ribonucleotides IMP (inosine 5'-monophosphate) and GMP (guanosine 5'-monophosphate), with the release of PPi. In Mycoplasma pneumoniae (strain ATCC 29342 / M129 / Subtype 1) (Mycoplasmoides pneumoniae), this protein is Hypoxanthine-guanine phosphoribosyltransferase (hpt).